Reading from the N-terminus, the 1501-residue chain is Multidrug resistance protein CDR1 (1501 aa).

The tract at residues 1 to 30 (MSDSKMSSQDESKLEKAISQDSSSENHSIN) is disordered. The Cytoplasmic portion of the chain corresponds to 1-513 (MSDSKMSSQD…NFLRMKGDPS (513 aa)). Over residues 8–18 (SQDESKLEKAI) the composition is skewed to basic and acidic residues. An ABC transporter 1 domain is found at 150 to 404 (LATEGFRHFQ…FEKMGWKCPQ (255 aa)). The helical transmembrane segment at 514–534 (IPIFSVFGQLVMGLILSSVFY) threads the bilayer. Asn535 carries N-linked (GlcNAc...) asparagine glycosylation. Transmembrane regions (helical) follow at residues 549–569 (AMFF…MSLF), 598–618 (LPVK…MVNF), 623–643 (GRFF…SHLF), and 655–675 (GAMT…GFVI). N-linked (GlcNAc...) asparagine glycosylation is present at Asn724. A helical transmembrane segment spans residues 765–785 (LGITIGFAVFFLAIYIALTEF). The Cytoplasmic segment spans residues 786–1195 (NKGAMQKGEI…TIVQDWRSPG (410 aa)). Residues 859 to 1103 (FFWRDLTYQV…MINYFEKYGA (245 aa)) form the ABC transporter 2 domain. 895-902 (GASGAGKT) is a binding site for ATP. 6 helical membrane passes run 1196–1216 (YIYS…FSFF), 1230–1250 (FSVF…LPYF), 1281–1301 (IPYQ…PLGL), 1315–1335 (GVLM…MGQL), 1356–1376 (MCLN…FWIF), and 1467–1487 (FGIF…FYWL).

The protein belongs to the ABC transporter superfamily. ABCG family. PDR (TC 3.A.1.205) subfamily.

The protein resides in the membrane. Functionally, transporter, whose physiological function is not yet established. Confers resistance to the chemical cycloheximide. The protein is Multidrug resistance protein CDR1 (CDR1) of Candida albicans (Yeast).